The sequence spans 382 residues: RIB43A-like with coiled-coils protein 2 (382 aa).

A coiled-coil region spans residues N222–D255.

Belongs to the RIB43A family. In terms of assembly, microtubule inner protein component of sperm flagellar doublet microtubules. Expressed in airway epithelial cells.

The protein resides in the cytoplasm. Its subcellular location is the cytoskeleton. It localises to the cilium axoneme. The protein localises to the flagellum axoneme. Its function is as follows. Microtubule inner protein (MIP) part of the dynein-decorated doublet microtubules (DMTs) in cilia axoneme, which is required for motile cilia beating. The polypeptide is RIB43A-like with coiled-coils protein 2 (Homo sapiens (Human)).